A 125-amino-acid polypeptide reads, in one-letter code: uncharacterized protein (125 aa).

The stretch at 5-33 (NLTVEQLAAELTKLQMENSHLKRKLRRSV) forms a coiled coil. Disordered regions lie at residues 22-50 (NSHL…TEPE) and 96-125 (FRLH…GQQQ). 2 stretches are compositionally biased toward basic and acidic residues: residues 39–50 (EPPKPRELTEPE) and 96–112 (FRLH…EKKL). Residues 113–125 (SKEKRRTARGQQQ) show a composition bias toward basic residues.

Belongs to the herpesviridae BLRF2 family.

This is an uncharacterized protein from Connochaetes taurinus (Blue wildebeest).